A 331-amino-acid polypeptide reads, in one-letter code: HTH-type transcriptional regulator GntR (331 aa).

In terms of domain architecture, HTH lacI-type spans 6–60 (PVLQDVADRVGVTKMTVSRFLRNPEQVSVALRGKIAAALDELGYIPNRAPDILSN). Residues 8-27 (LQDVADRVGVTKMTVSRFLR) constitute a DNA-binding region (H-T-H motif).

It participates in carbohydrate acid metabolism; D-gluconate degradation [regulation]. In terms of biological role, negative regulator for the gluconate utilization system GNT-I, the gntUKR operon. This Escherichia coli O6:H1 (strain CFT073 / ATCC 700928 / UPEC) protein is HTH-type transcriptional regulator GntR (gntR).